The primary structure comprises 295 residues: MADSVDRVFVHALNTVKKIPKTGASRPPPTDRLRLYGLYKQAMEGDVDGVMERPTAASGLASDELQREKDKWDAWNLQKGLSRTESKRRYIEALIDTMHRYATTPDAEELVSELEFVWNQIKDNSPSSSLSSPRPNQSTGAGAQQPQQEPEQASDGEGPLKELRPMSEYDEAELRSQRQVDLEDDEVDVPTSDRSSGRWQRKVERALTTMSAEVAALREQIMTGREWRTKKERSVPAWVKWFAWLLVKHIFADLVILSVVLLWLRKRKDQRLEDIVRAGVRLMREYVRNVLPSRG.

One can recognise an ACB domain in the interval 5–103 (VDRVFVHALN…LIDTMHRYAT (99 aa)). 2 disordered regions span residues 124–162 (NSPSSSLSSPRPNQSTGAGAQQPQQEPEQASDGEGPLKE) and 174–201 (LRSQRQVDLEDDEVDVPTSDRSSGRWQR). Over residues 125–153 (SPSSSLSSPRPNQSTGAGAQQPQQEPEQA) the composition is skewed to low complexity. Residue Asn136 is glycosylated (N-linked (GlcNAc...) asparagine). Residues 244-264 (WLLVKHIFADLVILSVVLLWL) traverse the membrane as a helical segment.

It belongs to the ATG37 family.

It is found in the peroxisome membrane. Acyl-CoA binding protein which acts as the peroxisome receptor for pexophagy. Required for both micropexophagy and macropexophagy, but not for the cytoplasm to vacuole transport (Cvt) or autophagy pathways. Required for functional micropexophagic apparatus (MIPA) and relocation of ATG11 to the peroxisome-sequestering arms of the vacuole. Binds palmitoyl-CoA but not oleyl-CoA. The polypeptide is Autophagy-related protein 37 (Gibberella zeae (strain ATCC MYA-4620 / CBS 123657 / FGSC 9075 / NRRL 31084 / PH-1) (Wheat head blight fungus)).